A 1708-amino-acid polypeptide reads, in one-letter code: 187-kDa microtubule-associated protein AIR9 (1708 aa).

Polar residues predominate over residues 67–93; that stretch reads SSLRVSGTTPVTIRRNSTGGVTENLAG. The disordered stretch occupies residues 67 to 255; sequence SSLRVSGTTP…KTSTPESRDS (189 aa). Positions 110 to 121 are enriched in basic and acidic residues; the sequence is DPVRRSLPELRK. The segment covering 122-134 has biased composition (low complexity); that stretch reads SSVSSLSAKTVSK. Positions 149 to 165 are enriched in polar residues; it reads GSRSLTKSTGFSLSKPE. Low complexity predominate over residues 173 to 234; sequence SVSVSSKRAP…SIRSKSFSSP (62 aa). LRR repeat units follow at residues 267–290, 291–315, 316–335, 337–359, 360–382, 384–402, and 403–425; these read AGDD…GLHL, SPNL…ILNR, VKVL…EPLE, CKML…LPQL, PNLE…SQPR, QVLA…FPYL, and PVLE…EAAS. 11 A9 repeats span residues 489–584, 601–682, 698–777, 793–878, 895–977, 994–1073, 1090–1167, 1183–1272, 1287–1365, 1382–1473, and 1489–1569; these read PSGY…FAIS, LNGE…QYKY, ITGD…VSTS, IVGD…VYVL, ITGD…RSCM, VVGA…AISE, FLGS…RSIR, IPDC…VVVI, VRVK…KMSE, FTGK…AYAE, and IEGQ…VSAS.

As to quaternary structure, interacts with KCBP. As to expression, strongly expressed in dividing cells, like the meristemic region of the root tip.

Its subcellular location is the cytoplasm. The protein localises to the cell cortex. It is found in the cytoskeleton. The protein resides in the phragmoplast. Microtubule-associated protein that may be involved in the maturation of cell plates and proper insertion of cross-walls after cytokinesis. The sequence is that of 187-kDa microtubule-associated protein AIR9 from Arabidopsis thaliana (Mouse-ear cress).